The primary structure comprises 123 residues: Large ribosomal subunit protein uL14c (123 aa).

Belongs to the universal ribosomal protein uL14 family. Part of the 50S ribosomal subunit.

It localises to the plastid. Its subcellular location is the chloroplast. Functionally, binds to 23S rRNA. The chain is Large ribosomal subunit protein uL14c from Triticum aestivum (Wheat).